The chain runs to 503 residues: ATP synthase subunit alpha (503 aa).

An ATP-binding site is contributed by 170–177; that stretch reads GDRKTGKT.

Belongs to the ATPase alpha/beta chains family. In terms of assembly, F-type ATPases have 2 components, CF(1) - the catalytic core - and CF(0) - the membrane proton channel. CF(1) has five subunits: alpha(3), beta(3), gamma(1), delta(1), epsilon(1). CF(0) has four main subunits: a(1), b(1), b'(1) and c(9-12).

It localises to the cellular thylakoid membrane. The enzyme catalyses ATP + H2O + 4 H(+)(in) = ADP + phosphate + 5 H(+)(out). Its function is as follows. Produces ATP from ADP in the presence of a proton gradient across the membrane. The alpha chain is a regulatory subunit. This Synechocystis sp. (strain ATCC 27184 / PCC 6803 / Kazusa) protein is ATP synthase subunit alpha.